A 631-amino-acid chain; its full sequence is MNKTAANNQRIMPIVKDAFRIHANPFPWKKAIGSGFASGFPVLVGALAGHTDYGLIASIGGFVYLYAGGESYKKRALKLLLVSIGIALSFGLGTLLSGMLWMMAAVLGLIGAAAMFIFSALGIQGPAPMFFVLAFLVSSGLPADPSQALFRAGLTFLGGIFAMGIALIGWLWNKHGPEGAVLQKTYHQLAACLSAVGTPGFHNAQHQTVLMLRTARQTVLGKGNRRKKSRHDERFFRLLEKADDIFIAIIHFSAETPDRETAQIEKALRQTGDMLANARVFNTFQINENESEPRRKLFEEINEVLYIASGRFDKQLDGEPSRLPSSFYFLRNAFDWKSPVLIRALKYGIVLFAADMFALAFGFARSYWIPLSAAAVMLGTTVVFTLHRAIQRSAGTVIGVILAGAILFFKPGGVYIAFCIAALQCLLEMLIVRNYALAVPFLTANALVITESMHGGAGAGYFMIARLTDVAVGSVIGLLGTMLLWRRFSTKRLPELVRNVIRLEGQFMEKLLTGQIADEHKLRVSLVRLRDAYDKALGEFPHANADALWPAISGAQHLGYYLLSAQAHRRPSAPFSDEEINQLRAFFEQAEQSFIMKRMPADIQVPHVPHYPRISKELSALYSGLRTAFEK.

9 helical membrane-spanning segments follow: residues 42 to 62 (VLVG…IGGF), 76 to 96 (ALKL…GTLL), 106 to 128 (VLGL…GPAP), 152 to 172 (AGLT…GWLW), 344 to 364 (ALKY…FGFA), 366 to 386 (SYWI…VFTL), 398 to 418 (IGVI…YIAF), 429 to 449 (MLIV…ALVI), and 464 to 484 (IARL…TMLL).

Belongs to the YccS/YhfK family.

It localises to the cell membrane. This is an uncharacterized protein from Bacillus subtilis (strain 168).